Here is a 411-residue protein sequence, read N- to C-terminus: Tyrosine--tRNA ligase (411 aa).

Y33 provides a ligand contact to L-tyrosine. Positions 38–47 (PTAESLHLGN) match the 'HIGH' region motif. L-tyrosine contacts are provided by Y160 and Q164. Positions 222-226 (KIGKS) match the 'KMSKS' region motif. An ATP-binding site is contributed by K225. One can recognise an S4 RNA-binding domain in the interval 347-411 (SVIETLIKNK…KKQVILFKTV (65 aa)).

This sequence belongs to the class-I aminoacyl-tRNA synthetase family. TyrS type 1 subfamily. In terms of assembly, homodimer.

Its subcellular location is the cytoplasm. The catalysed reaction is tRNA(Tyr) + L-tyrosine + ATP = L-tyrosyl-tRNA(Tyr) + AMP + diphosphate + H(+). Functionally, catalyzes the attachment of tyrosine to tRNA(Tyr) in a two-step reaction: tyrosine is first activated by ATP to form Tyr-AMP and then transferred to the acceptor end of tRNA(Tyr). The sequence is that of Tyrosine--tRNA ligase from Mycoplasmopsis agalactiae (strain NCTC 10123 / CIP 59.7 / PG2) (Mycoplasma agalactiae).